A 648-amino-acid polypeptide reads, in one-letter code: Bifunctional lysine-specific demethylase and histidyl-hydroxylase NO66 (648 aa).

Residues 1–168 (MSKVSSIFDT…KGAKAAKKNK (168 aa)) form a disordered region. Residues 17–28 (PATTENGAAAKP) are compositionally biased toward low complexity. Over residues 109–119 (DHRKHKEKLRK) the composition is skewed to basic residues. Over residues 123-137 (GVENSRQAAASTSML) the composition is skewed to polar residues. The segment covering 155–168 (PVHHKGAKAAKKNK) has biased composition (basic residues). Residues 308–453 (CSIRMLNPQT…DLLELYLPHA (146 aa)) form the JmjC domain. Residues histidine 354, aspartate 356, and histidine 419 each coordinate Fe cation.

The protein belongs to the ROX family. NO66 subfamily. It depends on Fe(2+) as a cofactor.

It localises to the nucleus. The catalysed reaction is N(6),N(6)-dimethyl-L-lysyl(36)-[histone H3] + 2 2-oxoglutarate + 2 O2 = L-lysyl(36)-[histone H3] + 2 formaldehyde + 2 succinate + 2 CO2. In terms of biological role, oxygenase that can act as both a histone lysine demethylase and a ribosomal histidine hydroxylase. Specifically demethylates 'Lys-4' (H3K4me) and 'Lys-36' (H3K36me) of histone H3, thereby playing a central role in histone code. The protein is Bifunctional lysine-specific demethylase and histidyl-hydroxylase NO66 of Culex quinquefasciatus (Southern house mosquito).